Consider the following 241-residue polypeptide: GTP cyclohydrolase III (241 aa).

It belongs to the archaeal-type GTP cyclohydrolase family.

The enzyme catalyses GTP + 3 H2O = 2-amino-5-formylamino-6-(5-phospho-D-ribosylamino)pyrimidin-4(3H)-one + 2 phosphate + 2 H(+). Functionally, catalyzes the formation of 2-amino-5-formylamino-6-ribofuranosylamino-4(3H)-pyrimidinone ribonucleotide monophosphate and inorganic phosphate from GTP. Also has an independent pyrophosphate phosphohydrolase activity. This Aeropyrum pernix (strain ATCC 700893 / DSM 11879 / JCM 9820 / NBRC 100138 / K1) protein is GTP cyclohydrolase III.